Here is a 270-residue protein sequence, read N- to C-terminus: MIOREX complex component 3 (270 aa).

A mitochondrion-targeting transit peptide spans 1–12; the sequence is MSRTIPFLFKLV.

As to quaternary structure, associates with the mitochondrial ribosome.

It localises to the mitochondrion. Its function is as follows. Component of MIOREX complexes, large expressome-like assemblies of ribosomes with factors involved in all the steps of post-transcriptional gene expression. This chain is MIOREX complex component 3, found in Saccharomyces cerevisiae (strain ATCC 204508 / S288c) (Baker's yeast).